We begin with the raw amino-acid sequence, 226 residues long: Endonuclease V (226 aa).

Residues D43 and D109 each contribute to the Mg(2+) site.

Belongs to the endonuclease V family. Requires Mg(2+) as cofactor.

The protein resides in the cytoplasm. The catalysed reaction is Endonucleolytic cleavage at apurinic or apyrimidinic sites to products with a 5'-phosphate.. Its function is as follows. DNA repair enzyme involved in the repair of deaminated bases. Selectively cleaves double-stranded DNA at the second phosphodiester bond 3' to a deoxyinosine leaving behind the intact lesion on the nicked DNA. The sequence is that of Endonuclease V from Kosmotoga olearia (strain ATCC BAA-1733 / DSM 21960 / TBF 19.5.1).